A 610-amino-acid polypeptide reads, in one-letter code: UvrABC system protein C (610 aa).

One can recognise a GIY-YIG domain in the interval 16–94 (SQPGVYRMYD…IKLYQPRYNV (79 aa)). The UVR domain maps to 204-239 (DQVLTQLISRMETASQNLEFEEAARIRDQIQAVRRV).

Belongs to the UvrC family. In terms of assembly, interacts with UvrB in an incision complex.

Its subcellular location is the cytoplasm. Its function is as follows. The UvrABC repair system catalyzes the recognition and processing of DNA lesions. UvrC both incises the 5' and 3' sides of the lesion. The N-terminal half is responsible for the 3' incision and the C-terminal half is responsible for the 5' incision. The protein is UvrABC system protein C of Escherichia coli (strain ATCC 8739 / DSM 1576 / NBRC 3972 / NCIMB 8545 / WDCM 00012 / Crooks).